Here is a 104-residue protein sequence, read N- to C-terminus: Gastrin (104 aa).

The N-terminal stretch at 1–21 is a signal peptide; it reads MQRLCVYVLILALALATFSEA. Positions 22–58 are excised as a propeptide; it reads SWKPRSRLQDAPSGPGANRGLEPHGLDQLGPASHHRR. The segment at 22 to 70 is disordered; the sequence is SWKPRSRLQDAPSGPGANRGLEPHGLDQLGPASHHRRQLGLQGPPQLVA. Gln59 and Gln76 each carry pyrrolidone carboxylic acid. Tyr87 carries the post-translational modification Sulfotyrosine. Phenylalanine amide is present on Phe92. Phosphoserine is present on Ser96. Positions 96–104 are excised as a propeptide; sequence SAEEGDQRP.

It belongs to the gastrin/cholecystokinin family.

It is found in the secreted. Its function is as follows. Gastrin stimulates the stomach mucosa to produce and secrete hydrochloric acid and the pancreas to secrete its digestive enzymes. It also stimulates smooth muscle contraction and increases blood circulation and water secretion in the stomach and intestine. The polypeptide is Gastrin (GAST) (Canis lupus familiaris (Dog)).